Consider the following 103-residue polypeptide: MYAVIKTGGKQYTVKEGDVLKIEMLPENVGNEIKFSEVLMLVDGDKVTCGTPFVAKATVKAEVLDHGRHKKVKIIKFRRRKHHMKQMGHRQYYSQVKITAIGK.

It belongs to the bacterial ribosomal protein bL21 family. In terms of assembly, part of the 50S ribosomal subunit. Contacts protein L20.

This protein binds to 23S rRNA in the presence of protein L20. This is Large ribosomal subunit protein bL21 from Legionella pneumophila (strain Paris).